The primary structure comprises 959 residues: General transcription factor II-I repeat domain-containing protein 1 (959 aa).

Residues Lys27 and Lys94 each participate in a glycyl lysine isopeptide (Lys-Gly) (interchain with G-Cter in SUMO2) cross-link. Over residues Pro96–Arg106 the composition is skewed to basic and acidic residues. Residues Pro96 to Ser117 are disordered. The stretch at Leu119–Ala213 is one GTF2I-like 1 repeat. Glycyl lysine isopeptide (Lys-Gly) (interchain with G-Cter in SUMO2) cross-links involve residues Lys184, Lys212, Lys225, Lys238, Lys271, Lys294, Lys308, Lys337, Lys436, Lys439, and Lys443. The segment at Cys230–Ser250 is disordered. The GTF2I-like 2 repeat unit spans residues Ile342–Lys436. Ser448 bears the Phosphoserine mark. The segment at Asn468–Arg492 is disordered. The stretch at Asp556–Pro650 is one GTF2I-like 3 repeat. Glycyl lysine isopeptide (Lys-Gly) (interchain with G-Cter in SUMO2) cross-links involve residues Lys567, Lys579, Lys588, Lys622, Lys638, and Lys648. Ser654 carries the phosphoserine modification. Positions Ser654–Val679 are disordered. Glycyl lysine isopeptide (Lys-Gly) (interchain with G-Cter in SUMO2) cross-links involve residues Pro669, Pro670, Asp680, and Lys684. Gln686 bears the Phosphoserine mark. GTF2I-like repeat units follow at residues Leu696–Glu790 and Ala793–Asp887. Residues Ile701, Lys724, Lys732, Lys772, Lys774, Lys787, Lys829, Lys889, and Lys893 each participate in a glycyl lysine isopeptide (Lys-Gly) (interchain with G-Cter in SUMO2) cross-link. The tract at residues Ala892 to Ser927 is disordered. The short motif at Pro898–Val905 is the Nuclear localization signal element. The segment covering Ser910–Ser923 has biased composition (low complexity).

It belongs to the TFII-I family. Interacts with the retinoblastoma protein (RB1) via its C-terminus. In terms of tissue distribution, highly expressed in adult skeletal muscle, heart, fibroblast, bone and fetal tissues. Expressed at lower levels in all other tissues tested.

The protein localises to the nucleus. Its function is as follows. May be a transcription regulator involved in cell-cycle progression and skeletal muscle differentiation. May repress GTF2I transcriptional functions, by preventing its nuclear residency, or by inhibiting its transcriptional activation. May contribute to slow-twitch fiber type specificity during myogenesis and in regenerating muscles. Binds troponin I slow-muscle fiber enhancer (USE B1). Binds specifically and with high affinity to the EFG sequences derived from the early enhancer of HOXC8. The polypeptide is General transcription factor II-I repeat domain-containing protein 1 (GTF2IRD1) (Homo sapiens (Human)).